A 103-amino-acid polypeptide reads, in one-letter code: NADH-quinone oxidoreductase subunit K (103 aa).

Helical transmembrane passes span 5-25 (VPTS…LIGV), 32-52 (ILIF…LVAF), and 66-86 (FIVM…IVAI).

It belongs to the complex I subunit 4L family. In terms of assembly, NDH-1 is composed of 15 different subunits. Subunits NuoA, H, J, K, L, M, N constitute the membrane sector of the complex.

The protein resides in the cell membrane. The catalysed reaction is a quinone + NADH + 5 H(+)(in) = a quinol + NAD(+) + 4 H(+)(out). Functionally, NDH-1 shuttles electrons from NADH, via FMN and iron-sulfur (Fe-S) centers, to quinones in the respiratory chain. The immediate electron acceptor for the enzyme in this species is believed to be a menaquinone. Couples the redox reaction to proton translocation (for every two electrons transferred, four hydrogen ions are translocated across the cytoplasmic membrane), and thus conserves the redox energy in a proton gradient. This chain is NADH-quinone oxidoreductase subunit K, found in Deinococcus radiodurans (strain ATCC 13939 / DSM 20539 / JCM 16871 / CCUG 27074 / LMG 4051 / NBRC 15346 / NCIMB 9279 / VKM B-1422 / R1).